A 399-amino-acid chain; its full sequence is Tyrosine--tRNA ligase (399 aa).

Positions proline 44–histidine 53 match the 'HIGH' region motif. The short motif at lysine 229–serine 233 is the 'KMSKS' region element. Lysine 232 contacts ATP. The S4 RNA-binding domain maps to isoleucine 338–valine 398.

It belongs to the class-I aminoacyl-tRNA synthetase family. TyrS type 2 subfamily. Homodimer.

The protein resides in the cytoplasm. The catalysed reaction is tRNA(Tyr) + L-tyrosine + ATP = L-tyrosyl-tRNA(Tyr) + AMP + diphosphate + H(+). Catalyzes the attachment of tyrosine to tRNA(Tyr) in a two-step reaction: tyrosine is first activated by ATP to form Tyr-AMP and then transferred to the acceptor end of tRNA(Tyr). This Sulfurimonas denitrificans (strain ATCC 33889 / DSM 1251) (Thiomicrospira denitrificans (strain ATCC 33889 / DSM 1251)) protein is Tyrosine--tRNA ligase.